The following is a 552-amino-acid chain: Histone deacetylase 15 (552 aa).

The RanBP2-type zinc finger occupies 86–115; it reads EFVKWCCVNCTMSNPGDMVHCCICGEHKES. Residues 149–462 are histone deacetylase; that stretch reads STAVGFDERM…ATAVIKVLLG (314 aa). Histidine 277 serves as the catalytic Proton donor/acceptor. Zn(2+) is bound by residues aspartate 313, histidine 315, and aspartate 404.

This sequence belongs to the histone deacetylase family. HD type 2 subfamily. As to quaternary structure, interacts with PIF3 in the dark. Interacts with HY5. Interacts with MYB96. Forms homotetramers. The cofactor is Zn(2+). Expressed in stems, leaves, flowers, siliques and mature seeds.

The protein localises to the nucleus. Its subcellular location is the cytoplasm. It carries out the reaction N(6)-acetyl-L-lysyl-[histone] + H2O = L-lysyl-[histone] + acetate. With respect to regulation, inhibited by trichostatin A (TSA), a well-known histone deacetylase inhibitor. Responsible for the deacetylation of lysine residues on the N-terminal part of the core histones (H2A, H2B, H3 and H4). Histone deacetylation gives a tag for epigenetic repression and plays an important role in transcriptional regulation, cell cycle progression and developmental events. Histone deacetylases act via the formation of large multiprotein complexes. Represses chlorophyll biosynthesis and photosynthesis in the dark. Is recruited by PIF3 to the promoters of chlorophyll biosynthetic and photosynthetic genes, and represses their transcription by histone deacetylation. Involved in the repression of hypocotyl cell elongation to promote photomorphogenesis. Is recruited by HY5 to the promoters of a subset of cell wall organization and auxin signaling-related genes, and represses gene expression by decreasing the levels of histone H4 acetylation in a light-dependent manner. Promotes abscisic acid (ABA) signaling. Is recruited by MYB96 to the promoters of a subset of Rho GTPase (ROP) genes, which repress ABA signaling at the early stages of signal transduction. Represses ROP expression by removing acetyl groups of histone H3 and H4 from the cognate regions, particularly in the presence of ABA. Represses the plant response to elevated ambient temperature by directly repressing warm temperature-responsive genes. The chain is Histone deacetylase 15 from Arabidopsis thaliana (Mouse-ear cress).